Here is a 96-residue protein sequence, read N- to C-terminus: Sec-independent protein translocase protein TatA (96 aa).

Residues 1–21 (MGFSSIWHWIIVLVVVLLLFG) form a helical membrane-spanning segment. The segment at 42-96 (GMADDEDDEAASVSAERRGIEDGKPAQTIYPPQQPQQPQQPPQQPPVHRDDAPRG) is disordered. Positions 56 to 65 (AERRGIEDGK) are enriched in basic and acidic residues. Residues 73–86 (PQQPQQPQQPPQQP) show a composition bias toward pro residues.

The protein belongs to the TatA/E family. In terms of assembly, the Tat system comprises two distinct complexes: a TatABC complex, containing multiple copies of TatA, TatB and TatC subunits, and a separate TatA complex, containing only TatA subunits. Substrates initially bind to the TatABC complex, which probably triggers association of the separate TatA complex to form the active translocon.

The protein localises to the cell inner membrane. Functionally, part of the twin-arginine translocation (Tat) system that transports large folded proteins containing a characteristic twin-arginine motif in their signal peptide across membranes. TatA could form the protein-conducting channel of the Tat system. This chain is Sec-independent protein translocase protein TatA, found in Rhodospirillum rubrum (strain ATCC 11170 / ATH 1.1.1 / DSM 467 / LMG 4362 / NCIMB 8255 / S1).